The primary structure comprises 493 residues: Protein nucleotidyltransferase YdiU (493 aa).

The ATP site is built by G96, G98, R99, K119, D131, G132, R182, and R189. Residue D258 is the Proton acceptor of the active site. Mg(2+) contacts are provided by N259 and D268. Residue D268 participates in ATP binding. A disordered region spans residues 471-493 (EKYTEFKNPPAPKERVSQTFCGT).

This sequence belongs to the SELO family. Requires Mg(2+) as cofactor. Mn(2+) serves as cofactor.

It catalyses the reaction L-seryl-[protein] + ATP = 3-O-(5'-adenylyl)-L-seryl-[protein] + diphosphate. The enzyme catalyses L-threonyl-[protein] + ATP = 3-O-(5'-adenylyl)-L-threonyl-[protein] + diphosphate. The catalysed reaction is L-tyrosyl-[protein] + ATP = O-(5'-adenylyl)-L-tyrosyl-[protein] + diphosphate. It carries out the reaction L-histidyl-[protein] + UTP = N(tele)-(5'-uridylyl)-L-histidyl-[protein] + diphosphate. It catalyses the reaction L-seryl-[protein] + UTP = O-(5'-uridylyl)-L-seryl-[protein] + diphosphate. The enzyme catalyses L-tyrosyl-[protein] + UTP = O-(5'-uridylyl)-L-tyrosyl-[protein] + diphosphate. In terms of biological role, nucleotidyltransferase involved in the post-translational modification of proteins. It can catalyze the addition of adenosine monophosphate (AMP) or uridine monophosphate (UMP) to a protein, resulting in modifications known as AMPylation and UMPylation. The chain is Protein nucleotidyltransferase YdiU from Nitrosococcus oceani (strain ATCC 19707 / BCRC 17464 / JCM 30415 / NCIMB 11848 / C-107).